Here is a 2104-residue protein sequence, read N- to C-terminus: MTTSGESADQQNDKLFRYLKKVAVELDEARARLREYEQRATEPVAVVGIGCRFPGGADGPEGLWDLVSQGRDAVTEFPNDRGWDTEGLFDPDPDAEGKTYTRWGAFVENATNFDAGFFGIPPSEVLAMDPQQRLMLEVSWEALEHAGIDPMSLRGSSTGVFTGIFAPSYGGKDVGALQGYGLTGSPVSVASGRVAYVLGLEGPALSVDTACSSSLVAIHWAMASLRSGECDMALAGGVTVMGLPSIFVGFSRQRGLAADGRCKAFAAAADGTGWGEGAGVLVLERLSDAQRNGHNVLAVVRGSAINQDGASNGLTAPNGLAQQRVIQAALANCGLTSADVDVVEAHGTATTLGDPIEAEALLATYGQGRPTDQPLWVGSIKSNMGHTQAAAGVAGVIKMVQAMRHGLMPASLHVDEPSKRVDWESGAVSVLAEARDWPDAGRPRRAGVSSFGISGTNAHVILEEAPAPEAVPDSESNKGEPSLPVVPWVISARSAEALTAQAGRLLAHVQADPQSNPVDIGFSLAGRSAFEHRAVVVGADRQQLLTGLATLADGAPGAGVVTGQAGSVGKTAVVFPGQGSQRIGMARELHDQLPVFAEAFDAVADELDRHLRIPLREVMWGSDAALLDSTEFAQPALFAVEVALFAALQRWGLQPDFVMGHSVGELSAAYVAGVLTLADAAMLVVARGRLMQALPAGGAMVAVAAAEDEVLPSLTDGVGIAAINAPKSVVISGAEAAVTAISDQFAQQGRRVHRLAVSHAFHSPLMEPMLEEFARIAAQVEAREPQIALVSNVTGELASADGGFGSAQYWVEHVRRAVRFADSARQLHTLGVTHFVEVGPGSGLTGSIEQSLAPAEAVVVSMLGKDRPEVASVLTAFGQLFSTGMSVDWPAVFAGSGATRVDLPTYAFQRRRFWEVPGADGPADATGLGLGGAEHALLGAVVERPDSGGVVLTGRLALADQPWLADHVIGGVVLFPGAGFVELAIRAGDEVGCAVVEELVLAAPLVLHPGMGVQVQVIVGAADDSGNRALSVYSRGDQSEDWLLNAEGMLGVEAASSGADLSVWPPEGAESVDISDGYAQLADRGYAYGPGFQGLVGVWRRDSELFAEVVAPSGVAVDKMGMHPVVLDAVLHALGLTAEQNPDSDETKLPFCWRGVSLHAGGAGRVRARLTMSGPDSISVEIADAAGLPVLTVGALVTRAMSAAQLRAAVAAAGGGAPDQGPLDVIWSPIPLSGSGTNGSAQPAVVSWADFCAGGDGGAAGDAGVVVWEPNPAGEDVVGSVYAATHAALEVLQSWFDGDRAGTLVVLTHGAVAMPGENVSDLAGAAVWGIVRSAQAENPGRIVLVDADAAVEAAELVAVGEPQLVVRSGAAHAARLAPAAPLLAVPADESAWRLAAGGGGTLEDLVIEPCPEVQAPLAAGQVRVAVRAVGVNFRDVVAALGMYPGEAPPLGAEGAGVVLEVGPQVSGVAVGDSVMGFLGGAGPLSVVDQQLITRMPQGWSFAQAAAVPVVFLTALFGLQDLAKIQPGESVLIHAGTGGVGMAAVQLARHWGVEIFVTASRGKWDTLRAMGFDDDHIGDSRTLDFEEKFLAVTDGRGVDVVLDSLAGDFVDASLRLLVRGGRFLEMGKTDIRDADKIAANYPGVWYRAFDLSEAGPVRMQEMLAEVRELFDTAVLHRLPVTTWDVRCAPAAFRFMSQARHIGKVVLTMPSALADGLADATVLITGATGAVGAVLARHMLDAYGVRHLVLASRRGDRAEGAAELAAELSEAGANVQVVACDVADRDAVEAMLARLSGEYPPVRGVIHAAGVLDDAVISSLTPERIDTVLRAKVDAAWNLHEATLDLDLSMFVLCSSIAATVGSPGQGNYSAANSFLDGLAAHRQAAGLAGISVAWGLWEQSGGMAAHLSSRDLARMSRSGLAPMNPEQAVGLLDAVLAINHPLMVATLLDRPALEARAQAGGLPPLFAGVVRRPRRRQIEDTGDAAQSKSALAERLNGLSAGERQDALVGLVCLQAAAVLGRPSPEDIDPEAGFQDLGFDSLTAVELRNRLKSATGLTLPPTVIFDHPTPTAIAEYVGRQIPDSQATQAEEEKLPESDGEMVSVTA.

Residues 41 to 464 form the Ketosynthase family 3 (KS3) domain; that stretch reads TEPVAVVGIG…GTNAHVILEE (424 aa). Active-site for beta-ketoacyl synthase activity residues include Cys-211, His-346, and His-386. Residues 571–887 are acyltransferase; it reads TAVVFPGQGS…GQLFSTGMSV (317 aa). Ser-662 serves as the catalytic For acyltransferase activity. An N-terminal hotdog fold region spans residues 935–1057; the sequence is HALLGAVVER…GMLGVEAASS (123 aa). Positions 935–1095 are dehydratase; that stretch reads HALLGAVVER…YAYGPGFQGL (161 aa). The PKS/mFAS DH domain maps to 935–1207; it reads HALLGAVVER…TRAMSAAQLR (273 aa). His-967 (proton acceptor; for dehydratase activity) is an active-site residue. A C-terminal hotdog fold region spans residues 1069–1207; sequence AESVDISDGY…TRAMSAAQLR (139 aa). The Proton donor; for dehydratase activity role is filled by Asp-1128. Positions 1400–1705 are enoylreductase; it reads GTLEDLVIEP…QARHIGKVVL (306 aa). NADP(+)-binding positions include 1530-1547 and 1719-1734; these read VLIHAGTGGVGMAAVQLA and TVLITGATGAVGAVLA. The tract at residues 1718-1899 is beta-ketoacyl reductase (KR); that stretch reads ATVLITGATG…SVAWGLWEQS (182 aa). Positions 2004–2079 constitute a Carrier domain; the sequence is DALVGLVCLQ…AIAEYVGRQI (76 aa). Residue Ser-2039 is modified to O-(pantetheine 4'-phosphoryl)serine. Positions 2081–2104 are disordered; sequence DSQATQAEEEKLPESDGEMVSVTA.

Belongs to the thiolase-like superfamily. Beta-ketoacyl-ACP synthases family. The cofactor is pantetheine 4'-phosphate.

It carries out the reaction a fatty acyl-[ACP] + malonyl-[ACP] + H(+) = a 3-oxoacyl-[ACP] + holo-[ACP] + CO2. It functions in the pathway lipid metabolism; fatty acid biosynthesis. Functionally, catalyzes the elongation by iterative transfer of p-hydroxybenzoyl group from FadD22 (pHBA-S-FAdD22) to form p-hydroxyphenylalkanoate (pHPA) intermediates during phenolphthiocerol (PPOL) biosynthesis. PPOL is an important intermediate in the biosynthesis of phenolic glycolipid (mycosid B). The sequence is that of Phenolphthiocerol synthesis polyketide synthase type I Pks15/1 (pks15/1) from Mycobacterium marinum (strain ATCC BAA-535 / M).